A 256-amino-acid polypeptide reads, in one-letter code: MLEFYGKRFESRLLLGTAQYPSPSILADAVRASLSRIVTVSLRRESGEARAGQDFWALIKALGVAVLPNTAGCHTPREAITTAHMAREVFGTNWIKLEVIGDTDTLQPDPFGLVEAARILCDEGFEVFPYMNDDLIVAERLIEAGCKVLMPWGAPIGSGRGLNNPYALKTMRAHFPDIPLVVDAGIGVPSHAAAAMELGFDAVLINTAVAKAGDPAAMARAFALAVEAGRLAYEADPIEARDMASPSTPLLGKAFL.

The active-site Schiff-base intermediate with DXP is Lys96. 1-deoxy-D-xylulose 5-phosphate-binding positions include Gly157, 184–185 (AG), and 206–207 (NT).

This sequence belongs to the ThiG family. In terms of assembly, homotetramer. Forms heterodimers with either ThiH or ThiS.

Its subcellular location is the cytoplasm. The enzyme catalyses [ThiS sulfur-carrier protein]-C-terminal-Gly-aminoethanethioate + 2-iminoacetate + 1-deoxy-D-xylulose 5-phosphate = [ThiS sulfur-carrier protein]-C-terminal Gly-Gly + 2-[(2R,5Z)-2-carboxy-4-methylthiazol-5(2H)-ylidene]ethyl phosphate + 2 H2O + H(+). Its pathway is cofactor biosynthesis; thiamine diphosphate biosynthesis. Its function is as follows. Catalyzes the rearrangement of 1-deoxy-D-xylulose 5-phosphate (DXP) to produce the thiazole phosphate moiety of thiamine. Sulfur is provided by the thiocarboxylate moiety of the carrier protein ThiS. In vitro, sulfur can be provided by H(2)S. In Brucella abortus (strain S19), this protein is Thiazole synthase.